We begin with the raw amino-acid sequence, 746 residues long: Actin filament-associated protein 1-like 1 (746 aa).

A disordered region spans residues 88-206; sequence EDQKKEPEAN…RLTHQWPSEE (119 aa). Over residues 98-107 the composition is skewed to polar residues; that stretch reads HTVTKPSKTD. Residues 108–119 are compositionally biased toward pro residues; sequence SPPPLPNTPPPE. A compositionally biased stretch (low complexity) spans 139–148; the sequence is SRSSSSPPNS. One can recognise a PH 1 domain in the interval 214-310; sequence DCHICAFLLR…WLHVVRDVTG (97 aa). A disordered region spans residues 336–371; the sequence is EKQTSDSDSMPSGESARDIRENGKPKRGALSELTGT. Positions 350 to 359 are enriched in basic and acidic residues; that stretch reads SARDIRENGK. One can recognise a PH 2 domain in the interval 406–497; it reads RCGYVGVLVN…WLGVLLAETG (92 aa). Disordered regions lie at residues 539–596 and 723–746; these read EVPF…TRAQ and PSIY…KKGT. Residues 562–575 show a composition bias toward polar residues; it reads SFSSSDTGKPSPQI. A coiled-coil region spans residues 591 to 682; sequence GKTRAQEDAR…VKENLKKSLA (92 aa). The span at 736–746 shows a compositional bias: basic and acidic residues; it reads KAKEWESKKGT.

The protein resides in the cytoplasm. It localises to the cell projection. Its subcellular location is the podosome. The protein localises to the invadopodium. It is found in the cytoskeleton. The protein resides in the stress fiber. May be involved in podosome and invadosome formation. The sequence is that of Actin filament-associated protein 1-like 1 (afap1l1) from Danio rerio (Zebrafish).